The chain runs to 262 residues: Small ribosomal subunit protein uS2 (262 aa).

The protein belongs to the universal ribosomal protein uS2 family.

This chain is Small ribosomal subunit protein uS2, found in Rhodospirillum rubrum (strain ATCC 11170 / ATH 1.1.1 / DSM 467 / LMG 4362 / NCIMB 8255 / S1).